The primary structure comprises 315 residues: Cobalamin biosynthesis protein CobD (315 aa).

The next 5 membrane-spanning stretches (helical) occupy residues 48-70, 75-94, 148-170, 208-230, and 292-314; these read IAGILTSCLVYLISFIIPFLSVQ, LHWILGELLSIMIIYTTIAI, LVDGITTPLFYAVFGGPAWAMLY, ITSYILVLSSLFLGYNFKNSLYI, and LILLSSILTFIFYILIYSGAAYF.

It belongs to the CobD/CbiB family.

Its subcellular location is the cell membrane. The protein operates within cofactor biosynthesis; adenosylcobalamin biosynthesis. Its function is as follows. Converts cobyric acid to cobinamide by the addition of aminopropanol on the F carboxylic group. In Leptospira interrogans serogroup Icterohaemorrhagiae serovar copenhageni (strain Fiocruz L1-130), this protein is Cobalamin biosynthesis protein CobD.